A 456-amino-acid chain; its full sequence is Trigger factor (456 aa).

A PPIase FKBP-type domain is found at 192–277; the sequence is GDTVVIDFVG…IHEVKTKEVP (86 aa).

Belongs to the FKBP-type PPIase family. Tig subfamily.

The protein localises to the cytoplasm. The enzyme catalyses [protein]-peptidylproline (omega=180) = [protein]-peptidylproline (omega=0). Functionally, involved in protein export. Acts as a chaperone by maintaining the newly synthesized protein in an open conformation. Functions as a peptidyl-prolyl cis-trans isomerase. The chain is Trigger factor from Streptococcus pyogenes serotype M12 (strain MGAS9429).